Here is a 209-residue protein sequence, read N- to C-terminus: Large ribosomal subunit protein uL3 (209 aa).

The segment at Thr113–Lys155 is disordered.

It belongs to the universal ribosomal protein uL3 family. In terms of assembly, part of the 50S ribosomal subunit. Forms a cluster with proteins L14 and L19.

Its function is as follows. One of the primary rRNA binding proteins, it binds directly near the 3'-end of the 23S rRNA, where it nucleates assembly of the 50S subunit. The sequence is that of Large ribosomal subunit protein uL3 from Lactobacillus delbrueckii subsp. bulgaricus (strain ATCC 11842 / DSM 20081 / BCRC 10696 / JCM 1002 / NBRC 13953 / NCIMB 11778 / NCTC 12712 / WDCM 00102 / Lb 14).